Here is a 269-residue protein sequence, read N- to C-terminus: Small ribosomal subunit protein uS2 (269 aa).

The tract at residues 228–269 is disordered; that stretch reads QLDSDDDYEEFDESLAEGDYDDYDEEEDEDSETVSSQEGEEE. Over residues 230–269 the composition is skewed to acidic residues; sequence DSDDDYEEFDESLAEGDYDDYDEEEDEDSETVSSQEGEEE.

This sequence belongs to the universal ribosomal protein uS2 family.

The polypeptide is Small ribosomal subunit protein uS2 (Crocosphaera subtropica (strain ATCC 51142 / BH68) (Cyanothece sp. (strain ATCC 51142))).